Consider the following 364-residue polypeptide: Probable UDP-arabinopyranose mutase 4 (364 aa).

Residues 106–108 (DDD) carry the DXD motif motif. Arg-154 carries an N-linked (Glc...) arginine glycan.

This sequence belongs to the RGP family. Heteromers with RGP1 and RGP2. The cofactor is Mn(2+). Mg(2+) is required as a cofactor. In terms of processing, reversibly glycosylated in vitro by UDP-glucose, UDP-xylose and UDP-galactose, but not UDP-mannose. Specifically expressed in developing seeds.

The protein resides in the cytoplasm. The protein localises to the cytosol. It localises to the golgi apparatus. It carries out the reaction UDP-beta-L-arabinofuranose = UDP-beta-L-arabinopyranose. Probable UDP-L-arabinose mutase involved in the biosynthesis of cell wall non-cellulosic polysaccharides. The polypeptide is Probable UDP-arabinopyranose mutase 4 (Arabidopsis thaliana (Mouse-ear cress)).